The chain runs to 210 residues: RNA binding protein, mRNA processing factor 2 (210 aa).

Positions 1–10 (MSNLKPDVEH) are enriched in basic and acidic residues. A disordered region spans residues 1-25 (MSNLKPDVEHCTGAGTGTGTGPSGP). S2 bears the N-acetylserine mark. In terms of domain architecture, RRM spans 31 to 108 (RTLFVSGLPV…QTLRLEFAKA (78 aa)). Residues 41-51 (DIKPRELYLLF) form an important for homodimerization region.

In terms of assembly, homodimer. Interacts with EEF2.

The protein resides in the cytoplasm. It is found in the nucleus. Its subcellular location is the stress granule. RNA-binding protein involved in the regulation of smooth muscle cell differentiation and proliferation in the gastrointestinal system. Binds NOG mRNA, the major inhibitor of the bone morphogenetic protein (BMP) pathway. Mediates an increase of NOG mRNA levels, thereby contributing to the negative regulation of BMP signaling pathway and promoting reversible dedifferentiation and proliferation of smooth muscle cells. Acts as a pre-mRNA alternative splicing regulator. Mediates ACTN1 and FLNB alternative splicing. Likely binds to mRNA tandem CAC trinucleotide or CA dinucleotide motifs. This Rattus norvegicus (Rat) protein is RNA binding protein, mRNA processing factor 2 (Rbpms2).